The chain runs to 348 residues: Mannonate dehydratase (348 aa).

The protein belongs to the mannonate dehydratase family. It depends on Fe(2+) as a cofactor. Requires Mn(2+) as cofactor.

It carries out the reaction D-mannonate = 2-dehydro-3-deoxy-D-gluconate + H2O. It participates in carbohydrate metabolism; pentose and glucuronate interconversion. In terms of biological role, catalyzes the dehydration of D-mannonate. This chain is Mannonate dehydratase, found in Streptococcus agalactiae serotype V (strain ATCC BAA-611 / 2603 V/R).